The following is a 108-amino-acid chain: uncharacterized protein (108 aa).

The protein belongs to the baculoviridae 11 kDa protein family.

This is an uncharacterized protein from Orgyia pseudotsugata (Douglas-fir tussock moth).